Here is a 295-residue protein sequence, read N- to C-terminus: Ectoine dioxygenase (295 aa).

Q129 is a binding site for L-ectoine. K135 lines the 2-oxoglutarate pocket. Positions 146, 148, and 247 each coordinate Fe cation.

Belongs to the PhyH family. EctD subfamily. In terms of assembly, homodimer. Requires Fe(2+) as cofactor.

It carries out the reaction L-ectoine + 2-oxoglutarate + O2 = 5-hydroxyectoine + succinate + CO2. Involved in the biosynthesis of 5-hydroxyectoine, called compatible solute, which helps organisms to survive extreme osmotic stress by acting as a highly soluble organic osmolyte. Catalyzes the 2-oxoglutarate-dependent selective hydroxylation of L-ectoine to yield (4S,5S)-5-hydroxyectoine. This is Ectoine dioxygenase from Streptomyces avermitilis (strain ATCC 31267 / DSM 46492 / JCM 5070 / NBRC 14893 / NCIMB 12804 / NRRL 8165 / MA-4680).